The chain runs to 159 residues: Afifavidin (159 aa).

The first 23 residues, 1–23 (MRRLASLAVALPLLAVVASPALA), serve as a signal peptide directing secretion. The Avidin-like domain maps to 36-151 (GVPAVSSSWV…GSDTFTLVNK (116 aa)). Biotin is bound by residues Asn46, Ser50, Tyr66, Asn68, and Gly74. An intrachain disulfide couples Cys75 to Cys104. Positions 106, 108, and 144 each coordinate biotin.

The protein belongs to the avidin/streptavidin family. In terms of assembly, exhibits a dynamic oligomeric assembly: the apo form self-assembles mostly into toroid-shaped homooctamers, with a small fraction of homodimers, yet upon biotin binding the intact afifavidin consists solely of the dimer.

It is found in the secreted. The exact role played by afifavidin is still obscure. Forms a strong non-covalent complex with biotin and 2-iminobiotin. The polypeptide is Afifavidin (Afifella pfennigii (Rhodobium pfennigii)).